Here is a 159-residue protein sequence, read N- to C-terminus: MSTKAIYPGTFDPITNGHIDIVTRAASMFDKVVLAIAASPSKKPMFTLDERIALATQATAHLVNVEVIGFSDLMASFARAQQANILIRGLRAVADFEYEMQLAHMNRHLMPTLESVFLMPCKEWSFISSSLVKEVARHQGDVSHFLPANVHQALLNKLK.

Residue Thr-10 participates in substrate binding. Residues 10–11 (TF) and His-18 contribute to the ATP site. The substrate site is built by Lys-42, Met-74, and Arg-88. Residues 89 to 91 (GLR), Glu-99, and 124 to 130 (WSFISSS) contribute to the ATP site.

Belongs to the bacterial CoaD family. In terms of assembly, homohexamer. Requires Mg(2+) as cofactor.

Its subcellular location is the cytoplasm. It catalyses the reaction (R)-4'-phosphopantetheine + ATP + H(+) = 3'-dephospho-CoA + diphosphate. Its pathway is cofactor biosynthesis; coenzyme A biosynthesis; CoA from (R)-pantothenate: step 4/5. Functionally, reversibly transfers an adenylyl group from ATP to 4'-phosphopantetheine, yielding dephospho-CoA (dPCoA) and pyrophosphate. This Klebsiella pneumoniae (strain 342) protein is Phosphopantetheine adenylyltransferase.